Consider the following 209-residue polypeptide: Aspartate kinase-like protein lolA1 (209 aa).

A compositionally biased stretch (basic and acidic residues) spans 1–11; sequence MLDESPMRKGD. The interval 1-27 is disordered; it reads MLDESPMRKGDSVSNDQSNPESNASVS. A compositionally biased stretch (polar residues) spans 12–27; that stretch reads SVSNDQSNPESNASVS.

Belongs to the aspartokinase family.

The protein operates within alkaloid biosynthesis. Aspartokinase-like protein; part of the gene cluster that mediates the biosynthesis of loline alkaloids, potent insecticidal agents composed of a pyrrolizidine ring system and an uncommon ether bridge linking carbons 2 and 7. Lolines are structurally differentiated by the various modifications of the L-amino group and include norloline, loline, N-methylloline, N-acetylloline, N-acetylnorloline, and N-formylloline. The first committed step is the condensation of O-acetyl-L-homoserine (derived from L-aspartic acid) and L-proline, probably catalyzed by the gamma-type pyridoxal 5'-phosphate(PLP)-dependent enzyme lolC, to give the diamino diacid, NACPP. Ensuing cyclization, decarboxylation, and acetylation steps yield 1-exo-acetamidopyrrolizidine (AcAP). LolO is required for installation of the ether bridge upon the pathway intermediate, 1-exo-acetamidopyrrolizidine (AcAP). In sequential 2-oxoglutarate- and O(2)-consuming steps, lolO removes hydrogens from C2 and C7 of AcAP to form both carbon-oxygen bonds in N-acetylnorloline (NANL), the precursor to all other lolines. The enzymes lolD, lolE, lolF and lolT have also been proposed to be involved in the ether-bridge installation. Further processing of the exocyclic moiety of NANL by fungal N-acetamidase (LolN), methyltransferase (LolM), and cytochrome P450 (LolP) enzymes, with occasional involvement of a plant acetyltransferase, generates the other known lolines. LolN transforms NANL to norlonine which is monomethylated and dimethylated to respectively lonine and N-methyllonine (NML) by lolM. LolP catalyzes hydroxylation of the methyl group in N-methylloline (NML) and further oxygenation to N-formylloline (NFL). A plant acetyltransferase is responsible for the acetylation of loline to form N-acetylloline (NAL). LolA might interact with aspartate kinase to prevent feedback inhibition of its activity by these end products and thereby promote production of L-homoserine from L-aspartate. This Epichloe uncinata (Endophyte fungus) protein is Aspartate kinase-like protein lolA1.